We begin with the raw amino-acid sequence, 160 residues long: MSDVENQPFFNIQRVYLKDMSLEQPNSPAIFLEQDMPSVEVEVDVKADRLAESVFEVVVSGTVTAKVKDKVAFLIEAKQAGIFDIRNIPDEQLDPLVGIACPTILFPYLRSNIADAITRAGFPPIHLAEINFQALYEQRLAQLQQQAGAAAGAPNGTTLN.

It belongs to the SecB family. In terms of assembly, homotetramer, a dimer of dimers. One homotetramer interacts with 1 SecA dimer.

It localises to the cytoplasm. One of the proteins required for the normal export of preproteins out of the cell cytoplasm. It is a molecular chaperone that binds to a subset of precursor proteins, maintaining them in a translocation-competent state. It also specifically binds to its receptor SecA. The sequence is that of Protein-export protein SecB from Burkholderia lata (strain ATCC 17760 / DSM 23089 / LMG 22485 / NCIMB 9086 / R18194 / 383).